The chain runs to 334 residues: Sulfhydrogenase 2 subunit beta (334 aa).

4Fe-4S ferredoxin-type domains are found at residues 220-250 (KVWKKYAEKCLGCGNCTIVCPTCRCYEVCDT) and 294-328 (CKNYFDPEAGFNCVGCGRCDEFCPARIEHVKVLDE). [4Fe-4S] cluster is bound by residues cysteine 229, cysteine 232, cysteine 235, cysteine 239, cysteine 306, cysteine 309, cysteine 312, and cysteine 316.

Dimer of heterotetramer of alpha, beta, gamma and delta subunits. The nickel-containing alpha and delta subunits constitute the hydrogenase activity. The beta and gamma subunits (flavin-containing dimer) constitute the sulfur reductase activity. [4Fe-4S] cluster serves as cofactor.

Its subcellular location is the cytoplasm. The catalysed reaction is n sulfur + H2 = (n-1) sulfur + hydrogen sulfide + H(+). In terms of biological role, part of a bifunctional enzyme complex that functions as a hydrogen-evolving hydrogenase with sulfur-reducing activity. May play a role in hydrogen cycling during fermentative growth. Activity exhibited with NAD in addition to NADPH. The beta and gamma subunits form the sulfur-reducing component that catalyzes the cytoplasmic production of hydrogen sulfide in the presence of elemental sulfur. The chain is Sulfhydrogenase 2 subunit beta from Pyrococcus furiosus (strain ATCC 43587 / DSM 3638 / JCM 8422 / Vc1).